A 205-amino-acid chain; its full sequence is MFLRHVIVFSLIALLTGCAGLTSREAVQGKGDPAQWREHKQQLSSLDGWQINGKVGIRAPKDSGSGTLFWLQRQDYYDIRLSGPLGRGAARLTGRPGAVVLEVANQGRYEATSPESLLQDQLGWKLPVSHLVWWVRGLPAPDSKSNVTLDGDSRLASLEQDGWQVEYLSYVEQNGYWLPERVKLHGQDLDVTLVIKDWQPRKLGQ.

The signal sequence occupies residues 1-17; that stretch reads MFLRHVIVFSLIALLTG. A lipid anchor (N-palmitoyl cysteine) is attached at cysteine 18. Cysteine 18 is lipidated: S-diacylglycerol cysteine.

Belongs to the LolB family. Monomer.

The protein resides in the cell outer membrane. Plays a critical role in the incorporation of lipoproteins in the outer membrane after they are released by the LolA protein. This Pseudomonas syringae pv. syringae (strain B728a) protein is Outer-membrane lipoprotein LolB.